The primary structure comprises 447 residues: Chordin-like protein 1 (447 aa).

The first 22 residues, 1-22 (MEGIKYIASLVFFFVFLEASKT), serve as a signal peptide directing secretion. 2 VWFC domains span residues 30–95 (TYCM…PRCP) and 108–174 (KSCE…RVCR). Asparagine 113 is a glycosylation site (N-linked (GlcNAc...) asparagine). The short motif at 174 to 176 (RGD) is the Cell attachment site element. The disordered stretch occupies residues 199-219 (HSYLRSPYDPPPSRQAGGLPR). The 66-residue stretch at 253 to 318 (QVCVSNGKTY…LDGKCCKVCP (66 aa)) folds into the VWFC 3 domain. N-linked (GlcNAc...) asparagine glycosylation is present at asparagine 286.

It localises to the secreted. In terms of biological role, seems to antagonize the function of BMP4 by binding to it and preventing its interaction with receptors. Alters the fate commitment of neural stem cells from gliogenesis to neurogenesis. Contributes to neuronal differentiation of neural stem cells in the brain by preventing the adoption of a glial fate. May play a crucial role in dorsoventral axis formation. May play a role in embryonic bone formation. Plays a role during anterior segment eye development. In Rattus norvegicus (Rat), this protein is Chordin-like protein 1 (Chrdl1).